A 268-amino-acid chain; its full sequence is Small ribosomal subunit protein eS1 (268 aa).

The interval Met1–Val21 is disordered.

The protein belongs to the eukaryotic ribosomal protein eS1 family. Component of the small ribosomal subunit. Mature ribosomes consist of a small (40S) and a large (60S) subunit. The 40S subunit contains about 33 different proteins and 1 molecule of RNA (18S). The 60S subunit contains about 49 different proteins and 3 molecules of RNA (28S, 5.8S and 5S).

Its subcellular location is the cytoplasm. Its function is as follows. Essential for oogenesis; required for late follicle cell development. The sequence is that of Small ribosomal subunit protein eS1 from Drosophila persimilis (Fruit fly).